The following is a 441-amino-acid chain: Enolase (441 aa).

Q164 lines the (2R)-2-phosphoglycerate pocket. Residue E206 is the Proton donor of the active site. Positions 243, 289, and 316 each coordinate Mg(2+). (2R)-2-phosphoglycerate contacts are provided by K341, R370, S371, and K392. The active-site Proton acceptor is the K341.

This sequence belongs to the enolase family. Requires Mg(2+) as cofactor.

It localises to the cytoplasm. The protein resides in the secreted. The protein localises to the cell surface. The catalysed reaction is (2R)-2-phosphoglycerate = phosphoenolpyruvate + H2O. It participates in carbohydrate degradation; glycolysis; pyruvate from D-glyceraldehyde 3-phosphate: step 4/5. Functionally, catalyzes the reversible conversion of 2-phosphoglycerate (2-PG) into phosphoenolpyruvate (PEP). It is essential for the degradation of carbohydrates via glycolysis. The chain is Enolase from Leuconostoc citreum (strain KM20).